The sequence spans 110 residues: Small ribosomal subunit protein bS16 (110 aa).

The segment at 87 to 110 (ARNNPEKAVPRKERKAAAEAAAKK) is disordered.

The protein belongs to the bacterial ribosomal protein bS16 family.

The polypeptide is Small ribosomal subunit protein bS16 (Rhodopseudomonas palustris (strain BisA53)).